Reading from the N-terminus, the 342-residue chain is Aquaporin-8 (342 aa).

3 helical membrane passes run 55–75 (FLAV…AIFT), 98–118 (VAGG…FAVL), and 126–146 (CIFY…TMFA). Positions 108–110 (NPA) match the NPA 1 motif. Asn166 is a glycosylation site (N-linked (GlcNAc...) asparagine). 2 helical membrane passes run 184–204 (TAFA…LAMC) and 215–235 (FLPI…SYNA). The NPA 2 motif lies at 240–242 (NPS). Residues 266-286 (YTWFFVPVLGSHCGAIIGGAI) form a helical membrane-spanning segment. The span at 302–327 (TNSVSSMSYNEDNSTLTKRKQVSNIV) shows a compositional bias: polar residues. The interval 302–342 (TNSVSSMSYNEDNSTLTKRKQVSNIVHDSKGAKGSSTAPVN) is disordered. N-linked (GlcNAc...) asparagine glycosylation is present at Asn314.

The protein belongs to the MIP/aquaporin (TC 1.A.8) family.

It is found in the cell membrane. In terms of biological role, aquaglyceroporin that may modulate the water content and osmolytes during anhydrobiosis. The chain is Aquaporin-8 from Milnesium tardigradum (Water bear).